Reading from the N-terminus, the 488-residue chain is Envelope glycoprotein gp62 (488 aa).

Residues 1-20 (MGKFLATLILFFQFCPLIFG) form the signal peptide. Over 21 to 442 (DYSPSCCTLT…LGLSQWAREA (422 aa)) the chain is Extracellular. Residues Asn140 and Asn222 are each glycosylated (N-linked (GlcNAc...) asparagine; by host). A CXXC motif is present at residues 225-228 (CIVC). Asn244 and Asn272 each carry an N-linked (GlcNAc...) asparagine; by host glycan. The tract at residues 313 to 333 (AVPVAVWLVSALAMGAGVAGG) is fusion peptide. Coiled coils occupy residues 341–387 (ASGK…LLFW) and 397–429 (QEQCRFPNITNSHVPILQERPPLENRVLTGWGL). An immunosuppression region spans residues 376-392 (AQNRRGLDLLFWEQGGL). A disulfide bridge links Cys393 with Cys400. Asn404 carries an N-linked (GlcNAc...) asparagine; by host glycan. The chain crosses the membrane as a helical span at residues 443-463 (LQTGITLVALLLLVILAGPCI). Cys462 carries the S-palmitoyl cysteine; by host lipid modification. Residues 464-488 (LRQLRHLPSRVRYPHYSLIKPESSL) are Cytoplasmic-facing.

As to quaternary structure, the mature envelope protein (Env) consists of a trimer of SU-TM heterodimers attached by non-covalent interactions or by a labile interchain disulfide bond. Specific enzymatic cleavages in vivo yield mature proteins. Envelope glycoproteins are synthesized as an inactive precursor that is N-glycosylated and processed likely by host cell furin or by a furin-like protease in the Golgi to yield the mature SU and TM proteins. The cleavage site between SU and TM requires the minimal sequence [KR]-X-[KR]-R. Post-translationally, the transmembrane protein is palmitoylated.

It is found in the virion membrane. The protein resides in the host cell membrane. In terms of biological role, the surface protein (SU) attaches the virus to the host cell by binding to its receptor. This interaction triggers the refolding of the transmembrane protein (TM) and is thought to activate its fusogenic potential by unmasking its fusion peptide. Fusion occurs at the host cell plasma membrane. Functionally, the transmembrane protein (TM) acts as a class I viral fusion protein. Under the current model, the protein has at least 3 conformational states: pre-fusion native state, pre-hairpin intermediate state, and post-fusion hairpin state. During viral and target cell membrane fusion, the coiled coil regions (heptad repeats) assume a trimer-of-hairpins structure, positioning the fusion peptide in close proximity to the C-terminal region of the ectodomain. The formation of this structure appears to drive apposition and subsequent fusion of viral and target cell membranes. Membranes fusion leads to delivery of the nucleocapsid into the cytoplasm. This is Envelope glycoprotein gp62 (env) from Homo sapiens (Human).